A 31-amino-acid chain; its full sequence is Potassium channel toxin alpha-KTx 19.2 (31 aa).

Intrachain disulfides connect cysteine 3/cysteine 22, cysteine 8/cysteine 27, and cysteine 12/cysteine 29.

It belongs to the short scorpion toxin superfamily. Potassium channel inhibitor family. Alpha-KTx 19 subfamily. As to quaternary structure, monomer. As to expression, expressed by the venom gland.

The protein localises to the secreted. Its function is as follows. Blocks voltage-gated potassium channels rKv1.1/KCNA1, rKv1.2/KCNA2, hKv1.3/KCNA3, rKv1.6/KCNA6 (IC(50)=75.9 nM) and, to a lesser extent, Shaker IR (with the inactivation domain removed). This chain is Potassium channel toxin alpha-KTx 19.2, found in Buthus occitanus tunetanus (Common European scorpion).